The following is a 314-amino-acid chain: Homeobox protein SIX3 (314 aa).

A DNA-binding region (homeobox) is located at residues 188–247 (GEQKTHCFKERTRSLLREWYLQDPYPNPSKKRELAQATGLTPTQVGNWFKNRRQRDRAAA). 2 disordered regions span residues 214 to 233 (NPSKKRELAQATGLTPTQVG) and 240 to 314 (RQRD…ECDV). Residues 271 to 293 (PTHSSAESPSTAASPTTSVSSLT) show a composition bias toward low complexity. The segment covering 298 to 314 (TGTSILSVTSSDSECDV) has biased composition (polar residues).

The protein belongs to the SIX/Sine oculis homeobox family.

Its subcellular location is the nucleus. Its function is as follows. Transcriptional regulator which can act as both a transcriptional repressor and activator by binding a ATTA homeodomain core recognition sequence on these target genes. During forebrain development represses WNT1 expression allowing zona limitans intrathalamica formation and thereby ensuring proper anterio-posterior patterning of the diencephalon and formation of the rostral diencephalon. Acts as a direct upstream activator of SHH expression in the rostral diencephalon ventral midline and that in turn SHH maintains its expression. In addition, Six3 activity is required for the formation of the telencephalon. During postnatal stages of brain development is necessary for ependymal cell maturation by promoting the maturation of radial glia into ependymal cells through regulation of neuroblast proliferation and migration. Acts on the proliferation and differentiation of neural progenitor cells through activating transcription of CCND1 and CCND2. During early lens formation plays a role in lens induction and specification by activating directly PAX6 in the presumptive lens ectoderm. In turn PAX6 activates SIX3 resulting in activation of PDGFRA and CCND1 promoting cell proliferation. Also is required for the neuroretina development by directly suppressing WNT8B expression in the anterior neural plate territory. Its action during retina development and lens morphogenesis is AES and TLE4-dependent manner. Furthermore, during eye development regulates several genes expression. Before and during early lens development represses the CRYGF promoter by binding a SIX repressor element. Directly activates RHO transcription, or cooperates with CRX or NRL. Six3 also functions in the formation of the proximodistal axis of the optic cup, and promotes the formation of optic vesicles-like structures. During pituitary development, acts in parallel or alternatively with HESX1 to control cell proliferation through Wnt/beta-catenin pathway. Plays a role in eye development by suppressing WNT1 expression and in dorsal-ventral patterning by repressing BMP signaling pathway. The polypeptide is Homeobox protein SIX3 (SIX3) (Gallus gallus (Chicken)).